A 438-amino-acid polypeptide reads, in one-letter code: Vasoactive intestinal polypeptide receptor 2 (438 aa).

A signal peptide spans 1–23 (MRTLLPPALLTCWLLAPVNSIHP). At 24-124 (ECRFHLEIQE…EDESKITFYI (101 aa)) the chain is on the extracellular side. Cystine bridges form between C38/C61, C52/C93, and C75/C109. N-linked (GlcNAc...) asparagine glycosylation is found at N58, N88, and N92. The chain crosses the membrane as a helical span at residues 125–150 (LVKAIYTLGYSVSLMSLATGSIILCL). Over 151–158 (FRKLHCTR) the chain is Cytoplasmic. A helical membrane pass occupies residues 159-180 (NYIHLNLFLSFILRAISVLVKD). Topologically, residues 181–203 (DVLYSSSGTLHCPDQPSSWVGCK) are extracellular. A disulfide bridge links C202 with C271. The helical transmembrane segment at 204–228 (LSLVFLQYCIMANFFWLLVEGLYLH) threads the bilayer. Over 229 to 239 (TLLVAMLPPRR) the chain is Cytoplasmic. A helical transmembrane segment spans residues 240–261 (CFLAYLLIGWGLPTVCIGAWTA). Residues 262–280 (ARLYLEDTGCWDTNDHSVP) are Extracellular-facing. A helical transmembrane segment spans residues 281–304 (WWVIRIPILISIIVNFVLFISIIR). The Cytoplasmic portion of the chain corresponds to 305 to 325 (ILLQKLTSPDVGGNDQSQYKR). Residues 326-346 (LAKSTLLLIPLFGVHYMVFAV) form a helical membrane-spanning segment. The Extracellular segment spans residues 347–354 (FPISISSK). Residues 355–378 (YQILFELCLGSFQGLVVAVLYCFL) traverse the membrane as a helical segment. The Cytoplasmic segment spans residues 379-438 (NSEVQCELKRKWRSRCPTPSASRDYRVCGSSFSRNGSEGALQFHRGSRAQSFLQTETSVI).

This sequence belongs to the G-protein coupled receptor 2 family. In terms of assembly, interacts with ADCYAP1/PACAP (via N-terminal extracellular domain); activated by PACAP27 and CAPAC38 neuropeptides. Interacts with VIP; the interaction results in VIPR1 activation. Expressed in CD4+ T-cells, but not in CD8+ T-cells. Expressed in the T-cell lines Jurkat, Peer, MOLT-4, HSB, YT and SUP-T1, but not in the T-cell lines HARRIS and HuT 78.

Its subcellular location is the cell membrane. G protein-coupled receptor activated by the neuropeptides vasoactive intestinal peptide (VIP) and pituitary adenylate cyclase-activating polypeptide (ADCYAP1/PACAP). Binds VIP and both PACAP27 and PACAP38 bioactive peptides with the following order of potency PACAP38 = VIP &gt; PACAP27. Ligand binding causes a conformation change that triggers signaling via guanine nucleotide-binding proteins (G proteins) and modulates the activity of downstream effectors. Activates cAMP-dependent pathway. May be coupled to phospholipase C. This Homo sapiens (Human) protein is Vasoactive intestinal polypeptide receptor 2.